A 239-amino-acid chain; its full sequence is O-antigen export system ATP-binding protein RfbE (239 aa).

The 212-residue stretch at 28 to 239 (VRVSTGGRIG…LIYEESMDIL (212 aa)) folds into the ABC transporter domain. 66-73 (GHNGAGKS) contacts ATP.

This sequence belongs to the ABC transporter superfamily.

Its subcellular location is the cell inner membrane. Functionally, may form an ATP-driven O-antigen export apparatus, in association with RfbD. The chain is O-antigen export system ATP-binding protein RfbE (rfbE) from Yersinia enterocolitica.